Here is a 664-residue protein sequence, read N- to C-terminus: Intraflagellar transport protein 70B (664 aa).

TPR repeat units lie at residues 11–44 (DGEF…SSRS), 45–78 (RAGL…HPEL), 153–186 (YDGQ…SGYQ), 188–220 (DLSY…GIRQ), 385–418 (LTEQ…YDET), 423–456 (IPVL…CNDH), and 458–491 (VWKL…NYDN). Residues 507–534 (YIMTSQNEEAEELMRKIEKEEEQLSYGD) adopt a coiled-coil conformation. The TPR 8 repeat unit spans residues 543-576 (CIVNLVIGTLYCAKGNYDFGISRVIKSLEPYHKK).

This sequence belongs to the TTC30/dfy-1/fleer family. In terms of assembly, interacts with the IFT B complex components IFT27, IFT46, IFT74, IFT52, IFT57, IFT80, IFT81 and IFT88. Interacts with KIF17.

It is found in the cell projection. The protein resides in the cilium. In terms of biological role, required for polyglutamylation of axonemal tubulin. Plays a role in anterograde intraflagellar transport (IFT), the process by which cilia precursors are transported from the base of the cilium to the site of their incorporation at the tip. This is Intraflagellar transport protein 70B (Ift70b) from Mus musculus (Mouse).